Here is a 315-residue protein sequence, read N- to C-terminus: Putative S-adenosyl-L-methionine-dependent methyltransferase MAV_4557 (315 aa).

Residues D134 and 163–164 (DL) each bind S-adenosyl-L-methionine.

It belongs to the UPF0677 family.

Its function is as follows. Exhibits S-adenosyl-L-methionine-dependent methyltransferase activity. In Mycobacterium avium (strain 104), this protein is Putative S-adenosyl-L-methionine-dependent methyltransferase MAV_4557.